Reading from the N-terminus, the 194-residue chain is 7-methyl-GTP pyrophosphatase (194 aa).

Catalysis depends on Asp-69, which acts as the Proton acceptor.

The protein belongs to the Maf family. YceF subfamily. The cofactor is a divalent metal cation.

It localises to the cytoplasm. The enzyme catalyses N(7)-methyl-GTP + H2O = N(7)-methyl-GMP + diphosphate + H(+). In terms of biological role, nucleoside triphosphate pyrophosphatase that hydrolyzes 7-methyl-GTP (m(7)GTP). May have a dual role in cell division arrest and in preventing the incorporation of modified nucleotides into cellular nucleic acids. The polypeptide is 7-methyl-GTP pyrophosphatase (yceF) (Shigella flexneri).